Here is a 535-residue protein sequence, read N- to C-terminus: Cytochrome P450 71C3 (535 aa).

A helical transmembrane segment spans residues 23 to 43 (QTLTLLLIAVPTVLLLLASLA). Cysteine 475 is a heme binding site.

It belongs to the cytochrome P450 family. Requires heme as cofactor.

It is found in the membrane. The protein operates within secondary metabolite biosynthesis; 2,4-dihydroxy-1,4-benzoxazin-3-one biosynthesis; 2,4-dihydroxy-1,4-benzoxazin-3-one from indoleglycerol phosphate: step 5/5. Functionally, catalyzes the conversion of 2-hydroxy-1,4-benzoxazin-3-one (HBOA) to 2,4-dihydroxy-1,4-benzoxazin-3-one (DIBOA). This chain is Cytochrome P450 71C3 (CYP71C3), found in Zea mays (Maize).